Consider the following 327-residue polypeptide: rRNA 2'-O-methyltransferase fibrillarin (327 aa).

The segment at 1–96 (MGTDYRNSGR…GFKGGAKTMV (96 aa)) is disordered. Residues Arg10, Arg19, Arg44, Arg49, Arg55, Arg65, Arg69, and Arg78 each carry the asymmetric dimethylarginine modification. Positions 22–56 (GNDRRDSGRSFGDRRPERPDFKRGDGGRGFGDRRG) are enriched in basic and acidic residues. A compositionally biased stretch (gly residues) spans 73–90 (DGPGGRGGPGGPGGGFKG). Residues 181–182 (TT), 200–201 (EF), 225–226 (DA), and 245–248 (DVAQ) contribute to the S-adenosyl-L-methionine site.

The protein belongs to the methyltransferase superfamily. Fibrillarin family. In terms of assembly, component of box C/D small nucleolar ribonucleoprotein (snoRNP) particles. It is associated with the U3, U8 and U13 small nuclear RNAs. In terms of processing, by homology to other fibrillarins, some or all of the N-terminal domain arginines are modified to asymmetric dimethylarginine (DMA).

The protein localises to the nucleus. It is found in the nucleolus. It catalyses the reaction L-glutaminyl-[histone H2A] + S-adenosyl-L-methionine = N(5)-methyl-L-glutaminyl-[histone H2A] + S-adenosyl-L-homocysteine + H(+). Functionally, S-adenosyl-L-methionine-dependent methyltransferase that has the ability to methylate both RNAs and proteins. Involved in pre-rRNA processing. Utilizes the methyl donor S-adenosyl-L-methionine to catalyze the site-specific 2'-hydroxyl methylation of ribose moieties in pre-ribosomal RNA. Site specificity is provided by a guide RNA that base pairs with the substrate. Methylation occurs at a characteristic distance from the sequence involved in base pairing with the guide RNA. Also acts as a protein methyltransferase by mediating methylation of 'Gln-105' of histone H2A (H2AQ105me), a modification that impairs binding of the FACT complex and is specifically present at 35S ribosomal DNA locus. The sequence is that of rRNA 2'-O-methyltransferase fibrillarin from Giardia intestinalis (Giardia lamblia).